Here is a 398-residue protein sequence, read N- to C-terminus: Succinate--CoA ligase [ADP-forming] subunit beta (398 aa).

Positions 9-254 constitute an ATP-grasp domain; that stretch reads KRLLHEYGAP…TSEEDPKEIE (246 aa). ATP is bound by residues Lys46, 53 to 55, Glu109, Ala112, and Glu117; that span reads GRG. Residues Asn209 and Asp223 each contribute to the Mg(2+) site. Substrate contacts are provided by residues Asn274 and 331 to 333; that span reads GIM.

Belongs to the succinate/malate CoA ligase beta subunit family. In terms of assembly, heterotetramer of two alpha and two beta subunits. Mg(2+) serves as cofactor.

The enzyme catalyses succinate + ATP + CoA = succinyl-CoA + ADP + phosphate. It carries out the reaction GTP + succinate + CoA = succinyl-CoA + GDP + phosphate. Its pathway is carbohydrate metabolism; tricarboxylic acid cycle; succinate from succinyl-CoA (ligase route): step 1/1. Its function is as follows. Succinyl-CoA synthetase functions in the citric acid cycle (TCA), coupling the hydrolysis of succinyl-CoA to the synthesis of either ATP or GTP and thus represents the only step of substrate-level phosphorylation in the TCA. The beta subunit provides nucleotide specificity of the enzyme and binds the substrate succinate, while the binding sites for coenzyme A and phosphate are found in the alpha subunit. In Bartonella henselae (strain ATCC 49882 / DSM 28221 / CCUG 30454 / Houston 1) (Rochalimaea henselae), this protein is Succinate--CoA ligase [ADP-forming] subunit beta.